We begin with the raw amino-acid sequence, 356 residues long: Ferrochelatase (356 aa).

H214 and E295 together coordinate Fe cation.

Belongs to the ferrochelatase family.

The protein resides in the cytoplasm. It carries out the reaction heme b + 2 H(+) = protoporphyrin IX + Fe(2+). Its pathway is porphyrin-containing compound metabolism; protoheme biosynthesis; protoheme from protoporphyrin-IX: step 1/1. In terms of biological role, catalyzes the ferrous insertion into protoporphyrin IX. The chain is Ferrochelatase from Paraburkholderia phytofirmans (strain DSM 17436 / LMG 22146 / PsJN) (Burkholderia phytofirmans).